A 414-amino-acid polypeptide reads, in one-letter code: Serine hydroxymethyltransferase (414 aa).

(6S)-5,6,7,8-tetrahydrofolate contacts are provided by residues Leu-118 and Gly-122–Leu-124. The residue at position 226 (Lys-226) is an N6-(pyridoxal phosphate)lysine. Ser-353 to Phe-355 lines the (6S)-5,6,7,8-tetrahydrofolate pocket.

Belongs to the SHMT family. As to quaternary structure, homodimer. The cofactor is pyridoxal 5'-phosphate.

The protein localises to the cytoplasm. The enzyme catalyses (6R)-5,10-methylene-5,6,7,8-tetrahydrofolate + glycine + H2O = (6S)-5,6,7,8-tetrahydrofolate + L-serine. Its pathway is one-carbon metabolism; tetrahydrofolate interconversion. The protein operates within amino-acid biosynthesis; glycine biosynthesis; glycine from L-serine: step 1/1. Catalyzes the reversible interconversion of serine and glycine with tetrahydrofolate (THF) serving as the one-carbon carrier. This reaction serves as the major source of one-carbon groups required for the biosynthesis of purines, thymidylate, methionine, and other important biomolecules. Also exhibits THF-independent aldolase activity toward beta-hydroxyamino acids, producing glycine and aldehydes, via a retro-aldol mechanism. The chain is Serine hydroxymethyltransferase from Blochmanniella floridana.